Consider the following 111-residue polypeptide: Large ribosomal subunit protein P2 (111 aa).

Over residues 63-84 (ASMPTGGAPAAAAGGAATAPAA) the composition is skewed to low complexity. The interval 63–111 (ASMPTGGAPAAAAGGAATAPAAEAKEAKKEEKKEESEEEDEDMGFGLFD) is disordered. Residues 85-97 (EAKEAKKEEKKEE) show a composition bias toward basic and acidic residues. S98 carries the phosphoserine modification.

As to quaternary structure, part of the ribosomal stalk of the large ribosomal subunit; P1 and P2 exist as dimers which assemble on the P0 scaffold.

Its function is as follows. Plays an important role in the elongation step of protein synthesis. The protein is Large ribosomal subunit protein P2 of Artemia salina (Brine shrimp).